We begin with the raw amino-acid sequence, 171 residues long: UPF0398 protein spyM18_1659 (171 aa).

The protein belongs to the UPF0398 family.

The sequence is that of UPF0398 protein spyM18_1659 from Streptococcus pyogenes serotype M18 (strain MGAS8232).